Consider the following 339-residue polypeptide: Protein H339R (339 aa).

The protein belongs to the asfivirus H339R family. Interacts with NACA (alpha chain of nascent polypeptide-associated complex).

It localises to the host cytoplasm. The protein localises to the host nucleus. The protein resides in the virion. The polypeptide is Protein H339R (African swine fever virus (isolate Warthog/Namibia/Wart80/1980) (ASFV)).